A 104-amino-acid chain; its full sequence is L-rhamnose mutarotase (104 aa).

Tyrosine 18 is a binding site for substrate. Catalysis depends on histidine 22, which acts as the Proton donor. Residues tyrosine 41 and 76–77 (WW) each bind substrate.

It belongs to the rhamnose mutarotase family. Homodimer.

It is found in the cytoplasm. It carries out the reaction alpha-L-rhamnose = beta-L-rhamnose. It participates in carbohydrate metabolism; L-rhamnose metabolism. Functionally, involved in the anomeric conversion of L-rhamnose. This is L-rhamnose mutarotase from Burkholderia ambifaria (strain ATCC BAA-244 / DSM 16087 / CCUG 44356 / LMG 19182 / AMMD) (Burkholderia cepacia (strain AMMD)).